We begin with the raw amino-acid sequence, 394 residues long: Phosphoglycerate kinase (394 aa).

Substrate contacts are provided by residues 21 to 23 (DFN), arginine 36, 59 to 62 (HLGR), arginine 118, and arginine 151. Serine 183 bears the Phosphoserine mark. ATP contacts are provided by lysine 201 and glycine 292. Phosphothreonine is present on threonine 299. ATP contacts are provided by residues glutamate 323 and 350–353 (GGDS).

The protein belongs to the phosphoglycerate kinase family. Monomer.

It localises to the cytoplasm. The catalysed reaction is (2R)-3-phosphoglycerate + ATP = (2R)-3-phospho-glyceroyl phosphate + ADP. The protein operates within carbohydrate degradation; glycolysis; pyruvate from D-glyceraldehyde 3-phosphate: step 2/5. The protein is Phosphoglycerate kinase of Bacillus cereus (strain Q1).